Consider the following 124-residue polypeptide: Small ribosomal subunit protein uS12 (124 aa).

Positions 1–25 are disordered; it reads MATINQLVRKPRQATTYKSASPALD. Residue Asp-89 is modified to 3-methylthioaspartic acid.

The protein belongs to the universal ribosomal protein uS12 family. Part of the 30S ribosomal subunit. Contacts proteins S8 and S17. May interact with IF1 in the 30S initiation complex.

Its function is as follows. With S4 and S5 plays an important role in translational accuracy. Interacts with and stabilizes bases of the 16S rRNA that are involved in tRNA selection in the A site and with the mRNA backbone. Located at the interface of the 30S and 50S subunits, it traverses the body of the 30S subunit contacting proteins on the other side and probably holding the rRNA structure together. The combined cluster of proteins S8, S12 and S17 appears to hold together the shoulder and platform of the 30S subunit. This is Small ribosomal subunit protein uS12 from Xanthomonas campestris pv. campestris (strain 8004).